A 132-amino-acid chain; its full sequence is Large ribosomal subunit protein uL22c (132 aa).

It belongs to the universal ribosomal protein uL22 family. In terms of assembly, part of the 50S ribosomal subunit.

The protein resides in the plastid. The protein localises to the chloroplast. Its function is as follows. This protein binds specifically to 23S rRNA. Functionally, the globular domain of the protein is located near the polypeptide exit tunnel on the outside of the subunit, while an extended beta-hairpin is found that lines the wall of the exit tunnel in the center of the 70S ribosome. In Staurastrum punctulatum (Green alga), this protein is Large ribosomal subunit protein uL22c (rpl22).